The following is a 491-amino-acid chain: Putative mannan endo-1,4-beta-mannosidase 5 (491 aa).

A signal peptide spans 1 to 31 (METSYREEEARRKASLLHCIFFFLLGALAMA). The substrate site is built by Trp134 and Asn248. Glu249 functions as the Proton donor in the catalytic mechanism. Residue Tyr330 participates in substrate binding. Residue Glu372 is the Nucleophile of the active site. Residue Asn385 is glycosylated (N-linked (GlcNAc...) asparagine). Substrate is bound at residue Trp416. Asn471 is a glycosylation site (N-linked (GlcNAc...) asparagine).

Belongs to the glycosyl hydrolase 5 (cellulase A) family. Expression not detected.

It is found in the secreted. The catalysed reaction is Random hydrolysis of (1-&gt;4)-beta-D-mannosidic linkages in mannans, galactomannans and glucomannans.. In Oryza sativa subsp. japonica (Rice), this protein is Putative mannan endo-1,4-beta-mannosidase 5 (MAN5).